We begin with the raw amino-acid sequence, 304 residues long: UTP--glucose-1-phosphate uridylyltransferase 1 (304 aa).

The protein belongs to the UDPGP type 2 family.

It carries out the reaction alpha-D-glucose 1-phosphate + UTP + H(+) = UDP-alpha-D-glucose + diphosphate. Its pathway is carbohydrate metabolism; nucleotide-sugar metabolism. The sequence is that of UTP--glucose-1-phosphate uridylyltransferase 1 (hasC1) from Streptococcus pyogenes serotype M18 (strain MGAS8232).